The primary structure comprises 393 residues: NAD(P)H-quinone oxidoreductase subunit H, chloroplastic (393 aa).

Belongs to the complex I 49 kDa subunit family. NDH is composed of at least 16 different subunits, 5 of which are encoded in the nucleus.

Its subcellular location is the plastid. It localises to the chloroplast thylakoid membrane. It catalyses the reaction a plastoquinone + NADH + (n+1) H(+)(in) = a plastoquinol + NAD(+) + n H(+)(out). The catalysed reaction is a plastoquinone + NADPH + (n+1) H(+)(in) = a plastoquinol + NADP(+) + n H(+)(out). Its function is as follows. NDH shuttles electrons from NAD(P)H:plastoquinone, via FMN and iron-sulfur (Fe-S) centers, to quinones in the photosynthetic chain and possibly in a chloroplast respiratory chain. The immediate electron acceptor for the enzyme in this species is believed to be plastoquinone. Couples the redox reaction to proton translocation, and thus conserves the redox energy in a proton gradient. This chain is NAD(P)H-quinone oxidoreductase subunit H, chloroplastic, found in Cucumis sativus (Cucumber).